The chain runs to 710 residues: DNA polymerase epsilon subunit B (710 aa).

Residues Phe-116 to Glu-167 form a disordered region. The segment covering Asn-121–Ser-144 has biased composition (polar residues).

This sequence belongs to the DNA polymerase epsilon subunit B family. As to quaternary structure, heterotetramer. Consists of four subunits: POL2, DPB2, DPB3 and DPB4.

It is found in the nucleus. As accessory component of the DNA polymerase epsilon (DNA polymerase II) participates in chromosomal DNA replication. The sequence is that of DNA polymerase epsilon subunit B (DPB2) from Kluyveromyces lactis (strain ATCC 8585 / CBS 2359 / DSM 70799 / NBRC 1267 / NRRL Y-1140 / WM37) (Yeast).